The primary structure comprises 387 residues: ATP-dependent Clp protease proteolytic subunit-related protein 1, chloroplastic (387 aa).

A chloroplast-targeting transit peptide spans 1 to 41 (MATALVSPLTSQLNHEAVCSKFVLPKSPFMSGSKLFSSNMP). Over residues 355–365 (QDSSFEKRDYD) the composition is skewed to basic and acidic residues. The disordered stretch occupies residues 355–387 (QDSSFEKRDYDGTLAQRAMRPGGGSPAAPAGLR).

This sequence belongs to the peptidase S14 family. In terms of assembly, component of the chloroplastic Clp protease core complex which consist of at least 16 proteins: CLPP4 (3 copies), CLPP5 (3 copies), CLPR4 (2 copies), ClpP1 (1 copy), CLPP6 (1 copy), CLPR2 (1 copy), CLPT1 (1 copy), CLPT2 (1 copy) and 3 copies of CLPP3 and/or CLPR1 and/or CLPR3. The core complex is organized in two heptameric rings, one containing CLPP3,4,5,6 in a 1:2:3:1 ratio and the other CLPP1 and CLPR1,2,3,4 in a 3:1:1:1:1 ratio.

It is found in the plastid. The protein localises to the chloroplast stroma. Its function is as follows. Required for chloroplast development and differentiation. In Arabidopsis thaliana (Mouse-ear cress), this protein is ATP-dependent Clp protease proteolytic subunit-related protein 1, chloroplastic.